Reading from the N-terminus, the 357-residue chain is MTSPLDGLIAEHAEIEGQLADPAVHNDPAKARALSRRYAQLAPVVDLARELDRVEGDLAAARELALLDPSFRDEVQDLGEELARLNDRLRAYLVPIDPDDARDAILEVKAGAGGEESALFAGDLLRMYLRYAERRGWKTEILDANPSDLGGYRDVSVAVKARGPAGPGDGVYGRLRFEGGVHRVQRVPVTESAGRIHTSAAGVLVLPEAEEVDVEIDPNDLRIDVFRSSGPGGQSVNTTDSAVRITHIPTGVVVSCQNEKSQLQNKESALRILRARLLGAAREKAESEASLARASQVRTVDRSERVRTYNFAENRISDHRVGYKAHNLDQVLDGELDEVLDALAAADLDARLAAQAS.

Position 234 is an N5-methylglutamine (glutamine 234).

Belongs to the prokaryotic/mitochondrial release factor family. In terms of processing, methylated by PrmC. Methylation increases the termination efficiency of RF1.

The protein localises to the cytoplasm. Its function is as follows. Peptide chain release factor 1 directs the termination of translation in response to the peptide chain termination codons UAG and UAA. The sequence is that of Peptide chain release factor 1 from Frankia casuarinae (strain DSM 45818 / CECT 9043 / HFP020203 / CcI3).